A 415-amino-acid chain; its full sequence is Alpha-N-acetylgalactosaminidase (415 aa).

The N-terminal stretch at 1 to 17 (MLQKTVLLLALVAQVLM) is a signal peptide. 3 disulfide bridges follow: Cys-38-Cys-80, Cys-42-Cys-49, and Cys-127-Cys-158. Substrate-binding positions include 78-79 (DD) and Lys-154. Asp-156 acts as the Nucleophile in catalysis. Asn-177 carries an N-linked (GlcNAc...) asparagine glycan. An intrachain disulfide couples Cys-187 to Cys-209. Ser-188 is a substrate binding site. Asn-201 is a glycosylation site (N-linked (GlcNAc...) asparagine). 2 residues coordinate substrate: Arg-213 and Asp-217. Asp-217 acts as the Proton donor in catalysis. Residue Ser-322 is modified to Phosphoserine. Asn-330 carries N-linked (GlcNAc...) asparagine glycosylation. Phosphoserine is present on Ser-332. Asn-385 carries an N-linked (GlcNAc...) asparagine glycan.

This sequence belongs to the glycosyl hydrolase 27 family. As to quaternary structure, homodimer.

It is found in the lysosome. It catalyses the reaction Cleavage of non-reducing alpha-(1-&gt;3)-N-acetylgalactosamine residues from human blood group A and AB mucin glycoproteins, Forssman hapten and blood group A lacto series glycolipids.. It carries out the reaction a neolactoside IV(3)-alpha-GalNAc,IV(2)-alpha-Fuc-nLc4Cer(d18:1(4E)) + H2O = a neolactoside IV(2)-alpha-Fuc-nLc4Cer(d18:1(4E)) + N-acetyl-alpha-D-galactosamine. The catalysed reaction is a neolactoside IV(3)-alpha-GalNAc,IV(2)-alpha-Fuc-nLc4Cer(d18:0) + H2O = a neolactoside IV(2)-alpha-Fuc-nLc4Cer(d18:0) + N-acetyl-alpha-D-galactosamine. The enzyme catalyses a globoside IV3GalNAc-Gb4Cer + H2O = N-acetyl-alpha-D-galactosamine + a globoside Gb4Cer. In terms of biological role, removes terminal alpha-N-acetylgalactosamine residues from glycolipids and glycopeptides. Required for the breakdown of glycolipids. In Rattus norvegicus (Rat), this protein is Alpha-N-acetylgalactosaminidase (Naga).